The primary structure comprises 143 residues: YGPNELPAEEGKNAESAIEALKEYEPEMGKEIVPGDLVEISVGDKIPADLRIDQSILTGESVSVIKNILFSGTNVAAGKTQMAETEEIKTPLQQKVGEATETALIVLGEKEFTLEFSRVIVITGDNKKAEIGIAMGSGTAVAK.

The protein belongs to the cation transport ATPase (P-type) (TC 3.A.3) family. Type IIA subfamily.

Its subcellular location is the endoplasmic reticulum membrane. It localises to the sarcoplasmic reticulum membrane. It catalyses the reaction Ca(2+)(in) + ATP + H2O = Ca(2+)(out) + ADP + phosphate + H(+). This magnesium-dependent enzyme catalyzes the hydrolysis of ATP coupled with the transport of calcium. Transports calcium ions from the cytosol into the sarcoplasmic/endoplasmic reticulum lumen. Contributes to calcium sequestration involved in muscular excitation/contraction. In Chionoecetes opilio (Atlantic snow crab), this protein is Sarcoplasmic/endoplasmic reticulum calcium ATPase.